Here is a 215-residue protein sequence, read N- to C-terminus: Pyrrolidone-carboxylate peptidase (215 aa).

Catalysis depends on residues Glu80, Cys143, and His167.

It belongs to the peptidase C15 family. In terms of assembly, homotetramer.

The protein resides in the cytoplasm. The enzyme catalyses Release of an N-terminal pyroglutamyl group from a polypeptide, the second amino acid generally not being Pro.. In terms of biological role, removes 5-oxoproline from various penultimate amino acid residues except L-proline. In Brevibacillus brevis (strain 47 / JCM 6285 / NBRC 100599), this protein is Pyrrolidone-carboxylate peptidase.